We begin with the raw amino-acid sequence, 290 residues long: Light-independent protochlorophyllide reductase iron-sulfur ATP-binding protein (290 aa).

Residues 10–15 (GIGKST) and lysine 39 contribute to the ATP site. Residue serine 14 coordinates Mg(2+). [4Fe-4S] cluster contacts are provided by cysteine 95 and cysteine 129. ATP is bound at residue 180 to 181 (NR).

This sequence belongs to the NifH/BchL/ChlL family. Homodimer. Protochlorophyllide reductase is composed of three subunits; ChlL, ChlN and ChlB. The cofactor is [4Fe-4S] cluster.

The protein localises to the plastid. The protein resides in the chloroplast. It catalyses the reaction chlorophyllide a + oxidized 2[4Fe-4S]-[ferredoxin] + 2 ADP + 2 phosphate = protochlorophyllide a + reduced 2[4Fe-4S]-[ferredoxin] + 2 ATP + 2 H2O. It functions in the pathway porphyrin-containing compound metabolism; chlorophyll biosynthesis (light-independent). Component of the dark-operative protochlorophyllide reductase (DPOR) that uses Mg-ATP and reduced ferredoxin to reduce ring D of protochlorophyllide (Pchlide) to form chlorophyllide a (Chlide). This reaction is light-independent. The L component serves as a unique electron donor to the NB-component of the complex, and binds Mg-ATP. The chain is Light-independent protochlorophyllide reductase iron-sulfur ATP-binding protein from Chaetosphaeridium globosum (Charophycean green alga).